Consider the following 259-residue polypeptide: Thiazole synthase (259 aa).

Lys100 functions as the Schiff-base intermediate with DXP in the catalytic mechanism. Residues Gly161, 187–188 (AG), and 209–210 (NT) contribute to the 1-deoxy-D-xylulose 5-phosphate site.

This sequence belongs to the ThiG family. As to quaternary structure, homotetramer. Forms heterodimers with either ThiH or ThiS.

It is found in the cytoplasm. It catalyses the reaction [ThiS sulfur-carrier protein]-C-terminal-Gly-aminoethanethioate + 2-iminoacetate + 1-deoxy-D-xylulose 5-phosphate = [ThiS sulfur-carrier protein]-C-terminal Gly-Gly + 2-[(2R,5Z)-2-carboxy-4-methylthiazol-5(2H)-ylidene]ethyl phosphate + 2 H2O + H(+). Its pathway is cofactor biosynthesis; thiamine diphosphate biosynthesis. Catalyzes the rearrangement of 1-deoxy-D-xylulose 5-phosphate (DXP) to produce the thiazole phosphate moiety of thiamine. Sulfur is provided by the thiocarboxylate moiety of the carrier protein ThiS. In vitro, sulfur can be provided by H(2)S. This chain is Thiazole synthase, found in Halalkalibacterium halodurans (strain ATCC BAA-125 / DSM 18197 / FERM 7344 / JCM 9153 / C-125) (Bacillus halodurans).